A 536-amino-acid chain; its full sequence is uncharacterized protein (536 aa).

The segment at 71–98 (LFVIVKSGCSCPSGRICRHMLAVFLYVY) adopts an SWIM-type zinc-finger fold. A coiled-coil region spans residues 482–528 (YKEAARYLKKLRTLYKKAKKQKVWERYIQLLSSHYKRLRALQEELQK).

This is an uncharacterized protein from Bacillus subtilis (strain 168).